The primary structure comprises 375 residues: Growth/differentiation factor 8 (375 aa).

Residues 1-23 (MQKLQIFVYIYLFMLLVAGPVDL) form the signal peptide. Residues 24 to 266 (NENSEQKENV…VTDTPKRSRR (243 aa)) constitute a propeptide that is removed on maturation. N-linked (GlcNAc...) asparagine glycans are attached at residues Asn48 and Asn71. Cystine bridges form between Cys272/Cys282, Cys281/Cys340, Cys309/Cys372, and Cys313/Cys374.

It belongs to the TGF-beta family. In terms of assembly, homodimer; disulfide-linked. Interacts with WFIKKN2, leading to inhibit its activity. Interacts with FSTL3. Synthesized as large precursor molecule that undergoes proteolytic cleavage to generate an N-terminal propeptide and a disulfide linked C-terminal dimer, which is the biologically active molecule. The circulating form consists of a latent complex of the C-terminal dimer and other proteins, including its propeptide, which maintain the C-terminal dimer in a latent, inactive state. Ligand activation requires additional cleavage of the prodomain by a tolloid-like metalloproteinase.

Its subcellular location is the secreted. In terms of biological role, acts specifically as a negative regulator of skeletal muscle growth. The chain is Growth/differentiation factor 8 (MSTN) from Ovis aries (Sheep).